We begin with the raw amino-acid sequence, 109 residues long: Nucleoid-associated protein HAPS_1040 (109 aa).

The disordered stretch occupies residues 1–21 (MFGKGGLGGLMKQAQQMQERM). Low complexity predominate over residues 10–19 (LMKQAQQMQE).

The protein belongs to the YbaB/EbfC family. In terms of assembly, homodimer.

It localises to the cytoplasm. The protein resides in the nucleoid. Binds to DNA and alters its conformation. May be involved in regulation of gene expression, nucleoid organization and DNA protection. In Glaesserella parasuis serovar 5 (strain SH0165) (Haemophilus parasuis), this protein is Nucleoid-associated protein HAPS_1040.